Here is a 136-residue protein sequence, read N- to C-terminus: Non-structural protein 1 (136 aa).

This sequence belongs to the pneumovirus non-structural protein 1 family. In terms of assembly, monomer. Homomultimer. Heteromultimer with NS2. Interacts with the matrix protein M. Interacts with host ELOC and CUL2; this interaction allows NS1 to form an active E3 ligase with ELOC and CUL2. Interacts with host IRF3; this interaction leads to the disrupted association of IRF3 with CREBBP and thus reduced binding of IRF3 to the IFN-beta promoter. Interacts with host MAVS; this interaction prevents MAVS binding to RIGI and inhibits signaling pathway leading to interferon production. Interacts with host TRIM25 (via SPRY domain); this interaction suppresses RIGI ubiquitination and results in decreased interaction between RIGI and MAVS.

The protein resides in the host cytoplasm. It localises to the host mitochondrion. The protein localises to the host nucleus. In terms of biological role, plays a major role in antagonizing the type I IFN-mediated antiviral response by degrading or inhibiting multiple cellular factors required for either IFN induction or response pathways. Acts cooperatively with NS2 to repress activation and nuclear translocation of host IFN-regulatory factor IRF3. Also disrupts the association of IRF3 with CREBBP. Interacts with host mitochondrial-associated membrane (MAM) MAVS and prevents the interaction with RIGI. Interacts with TRIM25 to suppress TRIM25-mediated RIGI ubiquitination and thereby RIGI-MAVS interaction. Together with NS2, participates in the proteasomal degradation of host STAT2, IRF3, IRF7, TBK1 and RIGI through a NS-degradasome involving CUL2 and Elongin-C. The degradasome requires an intact mitochondrial MAVS. Decreases the levels of host TRAF3 and IKBKE/IKK-epsilon. As functions other than disruptions of the type I IFN-mediated antiviral signaling pathways, induces host SOCS1 and SOCS3 expression. Suppresses premature apoptosis by an NF-kappa-B-dependent, interferon-independent mechanism and thus facilitates virus growth. Additionally, NS1 may serve some inhibitory role in viral transcription and RNA replication. Suppresses proliferation and activation of host CD103+ CD8+ cytotoxic T-lymphocytes and Th17 helper T-lymphocytes. The protein is Non-structural protein 1 (1C) of Bos taurus (Bovine).